The following is a 291-amino-acid chain: Shikimate dehydrogenase (NADP(+)) (291 aa).

Shikimate-binding positions include 14–16 and T61; that span reads SKS. K65 acts as the Proton acceptor in catalysis. An NADP(+)-binding site is contributed by E77. Shikimate contacts are provided by N86 and D102. Residues 139-143, 164-169, and L232 contribute to the NADP(+) site; these read GAGGA and NRTFSR. Y234 lines the shikimate pocket. G256 contributes to the NADP(+) binding site.

This sequence belongs to the shikimate dehydrogenase family. As to quaternary structure, homodimer.

It catalyses the reaction shikimate + NADP(+) = 3-dehydroshikimate + NADPH + H(+). It participates in metabolic intermediate biosynthesis; chorismate biosynthesis; chorismate from D-erythrose 4-phosphate and phosphoenolpyruvate: step 4/7. Functionally, involved in the biosynthesis of the chorismate, which leads to the biosynthesis of aromatic amino acids. Catalyzes the reversible NADPH linked reduction of 3-dehydroshikimate (DHSA) to yield shikimate (SA). The protein is Shikimate dehydrogenase (NADP(+)) of Blochmanniella pennsylvanica (strain BPEN).